The chain runs to 320 residues: ATP-dependent 6-phosphofructokinase (320 aa).

G12 provides a ligand contact to ATP. 22-26 (RGVVR) lines the ADP pocket. Residues 73 to 74 (RF) and 103 to 106 (GDGS) each bind ATP. D104 contributes to the Mg(2+) binding site. 126–128 (TID) contributes to the substrate binding site. The Proton acceptor role is filled by D128. R155 contributes to the ADP binding site. Substrate-binding positions include R163 and 170 to 172 (MGR). ADP contacts are provided by residues 186-188 (GCE), K212, and 214-216 (KKH). Residues E223, R244, and 250 to 253 (HIQR) each bind substrate.

Belongs to the phosphofructokinase type A (PFKA) family. ATP-dependent PFK group I subfamily. Prokaryotic clade 'B1' sub-subfamily. Homotetramer. Mg(2+) is required as a cofactor.

It is found in the cytoplasm. The enzyme catalyses beta-D-fructose 6-phosphate + ATP = beta-D-fructose 1,6-bisphosphate + ADP + H(+). Its pathway is carbohydrate degradation; glycolysis; D-glyceraldehyde 3-phosphate and glycerone phosphate from D-glucose: step 3/4. Its activity is regulated as follows. Allosterically activated by ADP and other diphosphonucleosides, and allosterically inhibited by phosphoenolpyruvate. In terms of biological role, catalyzes the phosphorylation of D-fructose 6-phosphate to fructose 1,6-bisphosphate by ATP, the first committing step of glycolysis. The protein is ATP-dependent 6-phosphofructokinase of Aliivibrio salmonicida (strain LFI1238) (Vibrio salmonicida (strain LFI1238)).